Here is a 182-residue protein sequence, read N- to C-terminus: Oligoribonuclease (182 aa).

Residues 8–171 enclose the Exonuclease domain; sequence LIWIDLEMTG…DDIRESIKEL (164 aa). Tyrosine 129 is a catalytic residue.

Belongs to the oligoribonuclease family.

The protein resides in the cytoplasm. Functionally, 3'-to-5' exoribonuclease specific for small oligoribonucleotides. The protein is Oligoribonuclease of Haemophilus influenzae (strain 86-028NP).